We begin with the raw amino-acid sequence, 178 residues long: Acireductone dioxygenase (178 aa).

Residues H87, H89, E93, and H132 each contribute to the Fe(2+) site. The Ni(2+) site is built by H87, H89, E93, and H132.

Belongs to the acireductone dioxygenase (ARD) family. The cofactor is Fe(2+). It depends on Ni(2+) as a cofactor.

The protein resides in the cytoplasm. It is found in the nucleus. It carries out the reaction 1,2-dihydroxy-5-(methylsulfanyl)pent-1-en-3-one + O2 = 4-methylsulfanyl-2-oxobutanoate + formate + 2 H(+). The enzyme catalyses 1,2-dihydroxy-5-(methylsulfanyl)pent-1-en-3-one + O2 = 3-(methylsulfanyl)propanoate + CO + formate + 2 H(+). It participates in amino-acid biosynthesis; L-methionine biosynthesis via salvage pathway; L-methionine from S-methyl-5-thio-alpha-D-ribose 1-phosphate: step 5/6. Its function is as follows. Catalyzes 2 different reactions between oxygen and the acireductone 1,2-dihydroxy-3-keto-5-methylthiopentene (DHK-MTPene) depending upon the metal bound in the active site. Fe-containing acireductone dioxygenase (Fe-ARD) produces formate and 2-keto-4-methylthiobutyrate (KMTB), the alpha-ketoacid precursor of methionine in the methionine recycle pathway. Ni-containing acireductone dioxygenase (Ni-ARD) produces methylthiopropionate, carbon monoxide and formate, and does not lie on the methionine recycle pathway. In Candida albicans (strain SC5314 / ATCC MYA-2876) (Yeast), this protein is Acireductone dioxygenase.